Here is a 128-residue protein sequence, read N- to C-terminus: uncharacterized protein (128 aa).

It to M.jannaschii MJ0766.

This is an uncharacterized protein from Methanocaldococcus jannaschii (strain ATCC 43067 / DSM 2661 / JAL-1 / JCM 10045 / NBRC 100440) (Methanococcus jannaschii).